The chain runs to 292 residues: MVKVMLGIISVTLIWGYTWVAMKVGIHDIPPLLFSGLRLFIGAVPLFLILFIQRKKLSIQKEHLKSYIIMSLLMGLGYMGILTYGMQFVDSGKTSVLVYTMPIFVTVISHFSLNEKMNVYKTMGLVCGLFGLLFIFGKEMLNIDQSALFGELCVLVAALSWGIANVFSKLQFKHIDIIHMNAWHLMMGAVMLLVFSFIFEAVPSAEWTYQAVWSLLFNGLLSTGFTFVVWFWVLNQIQASKASMALMFVPVLALFFGWLQLHEQITINIILGALLICCGIFMNTFTFSRRKV.

10 consecutive transmembrane segments (helical) span residues 6-26, 32-52, 68-88, 94-114, 123-143, 147-167, 182-202, 214-234, 242-262, and 265-285; these read LGII…KVGI, LLFS…ILFI, IIMS…GMQF, TSVL…FSLN, MGLV…MLNI, ALFG…ANVF, AWHL…FEAV, SLLF…FWVL, ASMA…LQLH, and ITIN…MNTF. EamA domains follow at residues 13–137 and 159–285; these read LIWG…FIFG and LSWG…MNTF.

The protein belongs to the EamA transporter family.

The protein resides in the cell membrane. This is an uncharacterized protein from Bacillus subtilis (strain 168).